Here is a 396-residue protein sequence, read N- to C-terminus: 1-deoxy-D-xylulose 5-phosphate reductoisomerase (396 aa).

NADPH-binding residues include threonine 10, glycine 11, serine 12, isoleucine 13, and asparagine 123. Lysine 124 is a binding site for 1-deoxy-D-xylulose 5-phosphate. Glutamate 125 serves as a coordination point for NADPH. Residue aspartate 149 coordinates Mn(2+). Positions 150, 151, 185, and 208 each coordinate 1-deoxy-D-xylulose 5-phosphate. Glutamate 151 serves as a coordination point for Mn(2+). Glycine 214 contributes to the NADPH binding site. Residues serine 221, asparagine 226, lysine 227, and glutamate 230 each coordinate 1-deoxy-D-xylulose 5-phosphate. Glutamate 230 serves as a coordination point for Mn(2+).

This sequence belongs to the DXR family. It depends on Mg(2+) as a cofactor. Mn(2+) serves as cofactor.

It carries out the reaction 2-C-methyl-D-erythritol 4-phosphate + NADP(+) = 1-deoxy-D-xylulose 5-phosphate + NADPH + H(+). It participates in isoprenoid biosynthesis; isopentenyl diphosphate biosynthesis via DXP pathway; isopentenyl diphosphate from 1-deoxy-D-xylulose 5-phosphate: step 1/6. Functionally, catalyzes the NADPH-dependent rearrangement and reduction of 1-deoxy-D-xylulose-5-phosphate (DXP) to 2-C-methyl-D-erythritol 4-phosphate (MEP). The protein is 1-deoxy-D-xylulose 5-phosphate reductoisomerase of Shewanella baltica (strain OS155 / ATCC BAA-1091).